The following is a 152-amino-acid chain: Large ribosomal subunit protein uL15 (152 aa).

Positions 1–13 (MLTLGNLSPQEGS) are enriched in polar residues. The disordered stretch occupies residues 1–62 (MLTLGNLSPQ…GGQMPLQRRL (62 aa)). Residues 31-40 (TAGRGHKGFK) are compositionally biased toward basic residues.

Belongs to the universal ribosomal protein uL15 family. In terms of assembly, part of the 50S ribosomal subunit.

Binds to the 23S rRNA. This is Large ribosomal subunit protein uL15 from Desulfotalea psychrophila (strain LSv54 / DSM 12343).